The primary structure comprises 201 residues: Holliday junction branch migration complex subunit RuvA (201 aa).

Residues Met1–Gln63 form a domain I region. The segment at Ser64–Lys142 is domain II. The interval Ala143–Ser153 is flexible linker. Residues Ser153 to Lys201 are domain III.

This sequence belongs to the RuvA family. As to quaternary structure, homotetramer. Forms an RuvA(8)-RuvB(12)-Holliday junction (HJ) complex. HJ DNA is sandwiched between 2 RuvA tetramers; dsDNA enters through RuvA and exits via RuvB. An RuvB hexamer assembles on each DNA strand where it exits the tetramer. Each RuvB hexamer is contacted by two RuvA subunits (via domain III) on 2 adjacent RuvB subunits; this complex drives branch migration. In the full resolvosome a probable DNA-RuvA(4)-RuvB(12)-RuvC(2) complex forms which resolves the HJ.

It localises to the cytoplasm. In terms of biological role, the RuvA-RuvB-RuvC complex processes Holliday junction (HJ) DNA during genetic recombination and DNA repair, while the RuvA-RuvB complex plays an important role in the rescue of blocked DNA replication forks via replication fork reversal (RFR). RuvA specifically binds to HJ cruciform DNA, conferring on it an open structure. The RuvB hexamer acts as an ATP-dependent pump, pulling dsDNA into and through the RuvAB complex. HJ branch migration allows RuvC to scan DNA until it finds its consensus sequence, where it cleaves and resolves the cruciform DNA. In Listeria innocua serovar 6a (strain ATCC BAA-680 / CLIP 11262), this protein is Holliday junction branch migration complex subunit RuvA.